A 330-amino-acid chain; its full sequence is uncharacterized protein (330 aa).

Disordered stretches follow at residues 136 to 160 (VPPSVNEPKPKTSQTTKPPSNDESS) and 172 to 314 (DNEK…SQFN). Positions 223–235 (PKPPAPPPPPPVP) are enriched in pro residues. Positions 236 to 246 (ISMTPAAISVT) are enriched in low complexity. 3 stretches are compositionally biased toward polar residues: residues 263–276 (AQSTLPSVSSTTDE), 284–294 (TRSSSQSNSTV), and 304–314 (PASSPTFSQFN).

This is an uncharacterized protein from Danio rerio (Zebrafish).